Consider the following 142-residue polypeptide: Putative pre-16S rRNA nuclease (142 aa).

Belongs to the YqgF nuclease family.

It localises to the cytoplasm. Its function is as follows. Could be a nuclease involved in processing of the 5'-end of pre-16S rRNA. This Chlorobaculum tepidum (strain ATCC 49652 / DSM 12025 / NBRC 103806 / TLS) (Chlorobium tepidum) protein is Putative pre-16S rRNA nuclease.